Here is a 132-residue protein sequence, read N- to C-terminus: Fatty acid-binding protein (132 aa).

Residues arginine 107 and 127-129 contribute to the (5Z,8Z,11Z,14Z)-eicosatetraenoate site; that span reads RNY. (9Z)-octadecenoate is bound by residues arginine 107 and 127 to 129; that span reads RNY.

This sequence belongs to the calycin superfamily. Fatty-acid binding protein (FABP) family.

It localises to the cytoplasm. May play a role in the transport of fatty acids. Binds to various fatty acids but not retinoids. The chain is Fatty acid-binding protein from Schistosoma japonicum (Blood fluke).